Here is a 143-residue protein sequence, read N- to C-terminus: UPF0201 protein Pcal_0593 (143 aa).

This sequence belongs to the UPF0201 family.

The chain is UPF0201 protein Pcal_0593 from Pyrobaculum calidifontis (strain DSM 21063 / JCM 11548 / VA1).